A 332-amino-acid polypeptide reads, in one-letter code: Putative ketol-acid reductoisomerase 3 (332 aa).

The KARI N-terminal Rossmann domain maps to 1 to 182 (MDKTVLDASL…AIPGGIAVIS (182 aa)). The 147-residue stretch at 183–329 (SFEEEALLDL…KELYKILRRK (147 aa)) folds into the KARI C-terminal knotted domain.

This sequence belongs to the ketol-acid reductoisomerase family.

The catalysed reaction is (2R)-2,3-dihydroxy-3-methylbutanoate + NADP(+) = (2S)-2-acetolactate + NADPH + H(+). It catalyses the reaction (2R,3R)-2,3-dihydroxy-3-methylpentanoate + NADP(+) = (S)-2-ethyl-2-hydroxy-3-oxobutanoate + NADPH + H(+). It participates in amino-acid biosynthesis; L-isoleucine biosynthesis; L-isoleucine from 2-oxobutanoate: step 2/4. It functions in the pathway amino-acid biosynthesis; L-valine biosynthesis; L-valine from pyruvate: step 2/4. This is Putative ketol-acid reductoisomerase 3 (ilvC3) from Saccharolobus solfataricus (strain ATCC 35092 / DSM 1617 / JCM 11322 / P2) (Sulfolobus solfataricus).